The sequence spans 155 residues: MADLSSLKDLGTSSEAAAPAHVRKVDSLGRSYATGKRKDAVARVWVKAGSGKIIVNGKDFTAYFARPVLQMILRQPIVAAARDGQFDIIATVAGGGLSGQAGAVRHGLSKALTYFEPGLRSVLKKGGFLTRDSRVVERKKYGKAKARRSFQFSKR.

This sequence belongs to the universal ribosomal protein uS9 family.

This is Small ribosomal subunit protein uS9 from Rhizobium etli (strain ATCC 51251 / DSM 11541 / JCM 21823 / NBRC 15573 / CFN 42).